A 184-amino-acid polypeptide reads, in one-letter code: MNYQSEWLRIDPIKGSRRFSNLCWAFILVLGAIGFSLVGFSSYLGRDLIPILSSQQIIFLPQGIVMCFYGIAGIFLGFYLWCTILWNVGSGYNQFNKREGIVYLFRWGFPGENRRICIRFMIKDIQAIRMEIQEGFSPRRVLYLRIKGQQDVPLTRLDEELTLREMEEKAAELARFLRVSIEGF.

The next 2 membrane-spanning stretches (helical) occupy residues 22 to 42 (LCWA…GFSS) and 64 to 84 (IVMC…WCTI).

This sequence belongs to the Ycf4 family.

The protein resides in the plastid. The protein localises to the chloroplast thylakoid membrane. Functionally, seems to be required for the assembly of the photosystem I complex. In Angiopteris evecta (Mule's foot fern), this protein is Photosystem I assembly protein Ycf4.